A 179-amino-acid polypeptide reads, in one-letter code: MSRVGKKSITLPDKVTVKVNGSSVQVEGPKGKLSWTLPEGITATVEGNQLSVDRAGESRQLRALHGTNRSLLNNMVIGVSEGFVKNLEIVGVGFRAAVKGNILDLNLGKSHPINQVIPEGLKVTVTENTKVTVEGIDKQVVGQFAAEVRAYYPPEPYKGKGVRFVGEVIRRKEGKSVGK.

It belongs to the universal ribosomal protein uL6 family. In terms of assembly, part of the 50S ribosomal subunit.

Functionally, this protein binds to the 23S rRNA, and is important in its secondary structure. It is located near the subunit interface in the base of the L7/L12 stalk, and near the tRNA binding site of the peptidyltransferase center. The polypeptide is Large ribosomal subunit protein uL6 (Akkermansia muciniphila (strain ATCC BAA-835 / DSM 22959 / JCM 33894 / BCRC 81048 / CCUG 64013 / CIP 107961 / Muc)).